We begin with the raw amino-acid sequence, 398 residues long: Flavohemoprotein (398 aa).

Residues 9 to 147 (QLTPAQIKII…LAKLLIDLEA (139 aa)) enclose the Globin domain. Residue His-93 coordinates heme b. Active-site charge relay system residues include Tyr-103 and Glu-146. A reductase region spans residues 155–398 (WRWFKDFKVT…KLEYFGPYDP (244 aa)). The FAD-binding FR-type domain occupies 156-263 (RWFKDFKVTR…APPAGNFVYD (108 aa)). FAD contacts are provided by residues Tyr-196 and 212–215 (REYS). Residue 276 to 281 (GIGITP) coordinates NADP(+). An FAD-binding site is contributed by 395–398 (PYDP).

It belongs to the globin family. FAD serves as cofactor. Requires heme b as cofactor.

It localises to the cytoplasm. The catalysed reaction is 2 nitric oxide + NADPH + 2 O2 = 2 nitrate + NADP(+) + H(+). The enzyme catalyses 2 nitric oxide + NADH + 2 O2 = 2 nitrate + NAD(+) + H(+). Inhibited by imidazoles. Functionally, nitric oxide dioxygenase involved in NO detoxification in an aerobic process, termed nitric oxide dioxygenase (NOD) reaction that utilizes O(2) and NAD(P)H to convert NO to nitrate, which protects the fungus from various noxious nitrogen compounds. Therefore, plays a central role in the inducible response to nitrosative stress. Plays a role in virulence since nitric oxide is generated by macrophages of the host immune system. This Candida albicans (strain SC5314 / ATCC MYA-2876) (Yeast) protein is Flavohemoprotein (YHB1).